A 512-amino-acid polypeptide reads, in one-letter code: Cytochrome P450 monooxygenase poxM (512 aa).

A helical membrane pass occupies residues L15 to I35. Position 449 (C449) interacts with heme.

Belongs to the cytochrome P450 family. The cofactor is heme.

The protein resides in the membrane. It participates in secondary metabolite biosynthesis. Its function is as follows. Cytochrome P450 monooxygenase; part of the gene cluster that mediates the biosynthesis of oxaleimides, cytotoxic compounds containing an unusual disubstituted succinimide moiety. The first step of the pathway is provided by the HR-PKS poxF that serves in a new mode of collaborative biosynthesis with the PKS-NRPS poxE, by providing the olefin containing amino acid substrate via the synthesis of an ACP-bound dec-4-enoate. The cytochrome P450 monooxygenase poxM-catalyzed oxidation at the alpha-position creates the enzyme-bound 2-hydroxydec-4-enoyl-ACP thioester, which may be prone to spontaneous hydrolysis to yield 2-hydroxydec-4-enoic acid due to increased electrophilicity of the carbonyl. 2-hydroxydec-4-enoic acid can then be further oxidized by poxM to yield the alpha-ketoacid 2-oxodec-4-enoicacid, which is reductively aminated by the aminotransferase poxL to yield (S,E)-2-aminodec-4-enoic acid. The Hybrid PKS-NRPS synthetase poxE then performs condensation between the octaketide product of its PKS modules and the amino group of (S,E)-2-aminodec-4-enoic acid which is activated and incorporated by the adenylation domain. The resulting aminoacyl product can be cyclized by the Diels-Alderase PoxQ and reductively released by the reductive (R) domain of poxE to yield an aldehyde intermediate. The released aldehyde is then substrate for a Knoevenagel condensation by the hydrolyase poxO followed by an oxidation at the 5-position of the pyrrolidone ring. The presence of the olefin from the amino acid building block allows for migration of the substituted allyl group to occur. This allylic transposition reaction takes place in a conjugate addition, semipinacol-like fashion to yield a succinimide intermediate. Iterative two-electron oxidations of the C7 methyl of the succinimide intermediate to the carboxylic acid can be catalyzed by one of two remaining cytochrome P450 monooxygenasess poxC or poxD to yield oxaleimide A. Subsequent oxidation yields the maleimide scaffold oxaleimide I. Both oxaleimide A and oxaleimide I can undergo oxidative modifications in the decalin ring to yield the series of products oxaleimides B to H. This is Cytochrome P450 monooxygenase poxM from Penicillium oxalicum (strain 114-2 / CGMCC 5302) (Penicillium decumbens).